Consider the following 522-residue polypeptide: Circadian clock oscillator protein KaiC (522 aa).

2 consecutive KaiC domains span residues 1–248 (MKKS…INIF) and 262–522 (ARVS…DDLL). ATP is bound by residues Gly50, Thr51, Gly52, Lys53, Thr54, Ser90, Lys225, Leu226, Arg227, Thr229, His231, Thr241, Asp242, Thr291, Gly292, Thr293, Gly294, Lys295, Thr296, and Leu297. Thr54 is a Mg(2+) binding site. Thr296 is a binding site for Mg(2+). Glu319 is a Mg(2+) binding site. Trp332 lines the ATP pocket. At Ser432 the chain carries Phosphoserine; by autocatalysis. At Thr433 the chain carries Phosphothreonine; by autocatalysis. The ATP site is built by Arg452, Lys458, Met459, Arg460, Ser462, His464, and Lys466.

Belongs to the KaiC family. Homohexamer; hexamerization is dependent on ATP-binding. The KaiABC complex composition changes during the circadian cycle to control KaiC phosphorylation. Complexes KaiC(6), KaiA(2-4):KaiC(6), KaiB(6):KaiC(6) and KaiC(6):KaiB(6):KaiA(12) are among the most important forms, many form cooperatively. KaiC interacts with SasA, activating its autokinase function and leading to RpaA activation. It depends on Mg(2+) as a cofactor. In terms of processing, phosphorylated on serine and threonine residues by autocatalysis. Has a 4 step phosphorylation cycle; the autokinase acts first on Thr-433, then Ser-432. When Ser-432 is modified KaiC switches to an autophosphatase mode, acting first on phospho-Thr-433 then phospho-Ser-432.

The catalysed reaction is L-seryl-[protein] + ATP = O-phospho-L-seryl-[protein] + ADP + H(+). It carries out the reaction L-threonyl-[protein] + ATP = O-phospho-L-threonyl-[protein] + ADP + H(+). It catalyses the reaction ATP + H2O = ADP + phosphate + H(+). The interaction with KaiA enhances its phosphorylation status, while the interaction with KaiB decreases it. In terms of biological role, central component of the KaiABC oscillator complex, which constitutes the main circadian regulator in cyanobacteria. Complex composition changes during the circadian cycle to control KaiC phosphorylation. KaiA stimulates KaiC autophosphorylation, while KaiB sequesters KaiA, leading to KaiC autodephosphorylation. Clock output pathways impact the RpaA transcriptional regulator. KaiC enhances the autophosphorylation activity of SasA, which then transfers its phosphate group to RpaA to activate it. KaiB and KaiC together enhance the phospho-RpaA dephosphatase activity of CikA. Its function is as follows. Has a weak, temperature-independent ATPase activity; ATPase activity defines the circadian period. The phosphorylation state of KaiC modulates its ATPase activity and effects KaiB binding. The polypeptide is Circadian clock oscillator protein KaiC (Acaryochloris marina (strain MBIC 11017)).